A 427-amino-acid chain; its full sequence is Large ribosomal subunit protein uL4 (427 aa).

Alanine 2 carries the N-acetylalanine modification. An N6-acetyllysine modification is found at lysine 14. At arginine 97 the chain carries Omega-N-methylarginine. Lysine 106 carries the post-translational modification N6-acetyllysine. Lysine 239 participates in a covalent cross-link: Glycyl lysine isopeptide (Lys-Gly) (interchain with G-Cter in SUMO2). N6-acetyllysine is present on lysine 259. At threonine 266 the chain carries Phosphothreonine. 2 positions are modified to phosphoserine: serine 290 and serine 295. Residue arginine 300 is modified to Citrulline. Lysine 327 is covalently cross-linked (Glycyl lysine isopeptide (Lys-Gly) (interchain with G-Cter in SUMO2)). Lysine 333 and lysine 353 each carry N6-acetyllysine. An N6-acetyllysine; alternate modification is found at lysine 364. Residue lysine 364 forms a Glycyl lysine isopeptide (Lys-Gly) (interchain with G-Cter in SUMO1); alternate linkage. Serine 365 is subject to Phosphoserine. A disordered region spans residues 369-427 (AAVAGKKPVVGKKGKKAAVGVKKQKKPLVGKKAAATKKPAPEKKPAEKKPTTEEKKPAA). The span at 377–397 (VVGKKGKKAAVGVKKQKKPLV) shows a compositional bias: basic residues. The segment covering 407-427 (PAPEKKPAEKKPTTEEKKPAA) has biased composition (basic and acidic residues).

This sequence belongs to the universal ribosomal protein uL4 family. In terms of assembly, component of the large ribosomal subunit. May bind IPO9 with low affinity. Interacts with RBM3. In terms of processing, citrullinated by PADI4.

It localises to the cytoplasm. Functionally, component of the large ribosomal subunit. The ribosome is a large ribonucleoprotein complex responsible for the synthesis of proteins in the cell. In Pongo abelii (Sumatran orangutan), this protein is Large ribosomal subunit protein uL4 (RPL4).